The chain runs to 885 residues: DDT domain-containing protein DDB_G0282237 (885 aa).

The WAC domain occupies 20-125 (EEYFVIKFTK…GEIVSFKKAN (106 aa)). 3 disordered regions span residues 141-184 (ESDE…INAL), 201-264 (DDEN…SVRK), and 367-431 (LEDT…KENE). Residues 154-180 (SSSSSSTTTTTTTPTTPPTTTTTTSSS) show a composition bias toward low complexity. Residues 210 to 264 (KNNGDTSSDKKGEKEKEKEKEKEKEKEKEKEKEKEKEKEKEKEKEKDSDTKSVRK) are compositionally biased toward basic and acidic residues. A coiled-coil region spans residues 217–260 (SDKKGEKEKEKEKEKEKEKEKEKEKEKEKEKEKEKEKEKDSDTK). Residues 367–379 (LEDTEEESVDIES) are compositionally biased toward acidic residues. Residues 380–396 (NDNSNSNGNSNSNNNLD) are compositionally biased toward low complexity. The 61-residue stretch at 443 to 503 (SNTFGDFLMV…MKTIFTLPSY (61 aa)) folds into the DDT domain. The stretch at 530-565 (FQNEVKRIAIEEKEKQEKLKQLEEQNIRMLNLANEL) forms a coiled coil. Disordered stretches follow at residues 562–632 (ANEL…WKEE) and 707–744 (KQDD…QKKP). Over residues 567–577 (GSDDEDDEMKL) the composition is skewed to acidic residues. Residues 578-603 (DEDGNEIKKDVEMKDNDGTKDTKKDD) show a composition bias toward basic and acidic residues. Coiled coils occupy residues 593–628 (NDGT…GEEE) and 674–782 (ASEK…RDRN). Acidic residues-rich tracts occupy residues 604 to 631 (EENE…EWKE) and 715 to 729 (AEDD…EEQQ).

The protein resides in the nucleus. In Dictyostelium discoideum (Social amoeba), this protein is DDT domain-containing protein DDB_G0282237.